The following is a 608-amino-acid chain: Actin-interacting protein 1 (608 aa).

11 WD repeats span residues 62–101 (EHSC…HLLK), 106–149 (PIAG…GEIS), 150–190 (GQSK…FKMT), 193–232 (DHSR…LVGE), 237–276 (AHKG…LVSE), 323–362 (GHNK…NDRI), 366–403 (GHGN…YTDY), 444–483 (PIKY…LEPK), 487–526 (DHLG…PAHN), 531–570 (FHSA…KHTI), and 575–607 (HPQS…HVEN).

This sequence belongs to the WD repeat AIP1 family. Expressed in pupal wing cells.

The protein localises to the cytoplasm. Its subcellular location is the cytoskeleton. Its function is as follows. Induces disassembly of actin filaments in conjunction with ADF/cofilin family proteins. Together with GMF, promotes Arp2/3-nucleated actin filament array disassembly. Essential for organismal and cell viability. Required for the development of normal wing cell planar polarity. In egg chambers and together with GMF, plays an important role in directional migration of border cell clusters. The protein is Actin-interacting protein 1 (flr) of Drosophila melanogaster (Fruit fly).